The sequence spans 930 residues: RNA-binding protein 10 (930 aa).

2 stretches are compositionally biased toward basic and acidic residues: residues 1–14 and 21–45; these read MEYE…DRTG and RSQD…RSYP. The disordered stretch occupies residues 1–127; the sequence is MEYERRGGRG…EEDEEEEEKA (127 aa). N-acetylserine is present on glutamate 2. Phosphoserine occurs at positions 30, 61, and 89. The span at 59–70 shows a compositional bias: acidic residues; it reads DSSEEQSAEDSY. Over residues 80 to 89 the composition is skewed to basic residues; it reads RRRRRRHRHS. Over residues 98–111 the composition is skewed to basic and acidic residues; it reads RDGDYRDQDYRTEQ. Positions 112 to 125 are enriched in acidic residues; the sequence is GEEEEEEEDEEEEE. The region spanning 129–209 is the RRM 1 domain; sequence NIVMLRMLPQ…QKVSMHYSDP (81 aa). The RanBP2-type zinc-finger motif lies at 212-242; that stretch reads KINEDWLCNKCGVQNFKRREKCFKCGVPKSE. The region spanning 300–384 is the RRM 2 domain; sequence DTIILRNLNP…KTINVEFAKG (85 aa). N6-acetyllysine is present on lysine 383. Disordered stretches follow at residues 466–524, 537–569, 620–685, and 700–753; these read PGIT…AANS, SELQ…VPDV, EQSA…DERR, and KGAL…EEKL. Polar residues predominate over residues 508–524; that stretch reads YQQSAEASSSQGTAANS. Over residues 541–557 the composition is skewed to low complexity; the sequence is SPTHPSSALPPATSPTA. 3 stretches are compositionally biased toward basic and acidic residues: residues 623-639, 653-669, and 700-709; these read ADGH…GKEK, KDME…KENF, and KGALAERQHT. Serine 718, serine 723, serine 733, serine 736, and serine 738 each carry phosphoserine. Residues 743–753 are compositionally biased toward basic and acidic residues; the sequence is ERGGPEREEKL. The C2H2-type; atypical zinc-finger motif lies at 759 to 784; the sequence is LACLLCRRQFPSKEALIRHQQLSGLH. Serine 781 and serine 797 each carry phosphoserine. Residues 815–826 are compositionally biased toward basic and acidic residues; sequence RDRAAERREKYG. Residues 815–861 are disordered; that stretch reads RDRAAERREKYGIPEPPEPKRRKYGGISTASVDFEQPTRDGLGSDNI. At serine 845 the chain carries Phosphoserine. Residues 858–904 enclose the G-patch domain; sequence SDNIGSRMLQAMGWKEGSGLGRKKQGIVTPIEAQTRVRGSGLGARGS. Omega-N-methylarginine is present on arginine 902.

As to quaternary structure, associates with the spliceosome. Component of a large chromatin remodeling complex, at least composed of MYSM1, PCAF, RBM10 and KIF11/TRIP5.

The protein resides in the nucleus. Binds to ssRNA containing the consensus sequence 5'-AGGUAA-3'. May be involved in post-transcriptional processing, most probably in mRNA splicing. Binds to RNA homopolymers, with a preference for poly(G) and poly(U) and little for poly(A). May bind to specific miRNA hairpins. In Homo sapiens (Human), this protein is RNA-binding protein 10.